A 77-amino-acid chain; its full sequence is Acyl carrier protein (77 aa).

The Carrier domain maps to 2–77; that stretch reads ADVLERVTKI…DAVTYIESHL (76 aa). Serine 37 carries the O-(pantetheine 4'-phosphoryl)serine modification.

Belongs to the acyl carrier protein (ACP) family. 4'-phosphopantetheine is transferred from CoA to a specific serine of apo-ACP by AcpS. This modification is essential for activity because fatty acids are bound in thioester linkage to the sulfhydryl of the prosthetic group.

It localises to the cytoplasm. It functions in the pathway lipid metabolism; fatty acid biosynthesis. Functionally, carrier of the growing fatty acid chain in fatty acid biosynthesis. This is Acyl carrier protein from Bacillus anthracis (strain A0248).